Consider the following 181-residue polypeptide: Histone H1 (181 aa).

Disordered regions lie at residues 1–23 and 81–181; these read MTET…THPP and TKGA…PKKK. Over residues 8 to 19 the composition is skewed to basic residues; sequence KPKKVSKPKAKP. Residues 20 to 94 form the H15 domain; it reads THPPTSVMVM…GASGSFKLAA (75 aa). 2 stretches are compositionally biased toward basic residues: residues 103–119 and 145–181; these read AVAK…KAAA and KPKK…PKKK.

It belongs to the histone H1/H5 family.

The protein resides in the nucleus. It is found in the chromosome. Functionally, histones H1 are necessary for the condensation of nucleosome chains into higher-order structures. This chain is Histone H1, found in Tigriopus californicus (Marine copepod).